Here is a 130-residue protein sequence, read N- to C-terminus: Small ribosomal subunit protein uS9 (130 aa).

The segment at 111-130 (VERKKPGLKKARKASQFSKR) is disordered. Residues 116 to 130 (PGLKKARKASQFSKR) are compositionally biased toward basic residues.

The protein belongs to the universal ribosomal protein uS9 family.

In Lactococcus lactis subsp. lactis (strain IL1403) (Streptococcus lactis), this protein is Small ribosomal subunit protein uS9.